The primary structure comprises 187 residues: Transcriptional activator of sulfur metabolism MET28 (187 aa).

The bZIP domain maps to Asp105–Ile168. Residues Lys106–Lys136 form a basic motif region. Residues Leu137–Ile151 form a leucine-zipper region.

This sequence belongs to the bZIP family. In terms of assembly, interacts with MET4 to form a heteromeric complex which also includes CBF1. Forms two alternate complexes associating MET28 with MET4 and either MET31 or MET32. Binds to DNA through the MET4-MET28-CBF1 complex.

It localises to the cytoplasm. Its subcellular location is the nucleus. Acts as an accessory factor in the activation of sulfur amino acids metabolism genes. Possesses no intrinsic transcription activation abilities. Binds to the MET16 promoter as a complex with MET4 and CBF1. Enhances the DNA-binding activity of CBF1. The chain is Transcriptional activator of sulfur metabolism MET28 (MET28) from Saccharomyces cerevisiae (strain ATCC 204508 / S288c) (Baker's yeast).